A 514-amino-acid polypeptide reads, in one-letter code: Probable type III restriction-modification enzyme HindVIP Res subunit (514 aa).

The protein belongs to the type III restriction-modification system Res protein family. Contains two different subunits: Res and Mod. It depends on Mg(2+) as a cofactor. Requires S-adenosyl-L-methionine as cofactor.

It catalyses the reaction Endonucleolytic cleavage of DNA to give specific double-stranded fragments with terminal 5'-phosphates.. Functionally, a type III restriction enzyme that recognizes 2 inversely oriented double-stranded sequences 5'-CGAAT-3' and cleaves 25-27 base pairs downstream. After binding to one recognition site undergoes random one-dimensional diffusion along DNA until it collides with a stationary enzyme bound to the second DNA site, which is when DNA cleavage occurs. DNA restriction requires both the Res and Mod subunits. In Haemophilus influenzae (strain ATCC 51907 / DSM 11121 / KW20 / Rd), this protein is Probable type III restriction-modification enzyme HindVIP Res subunit.